A 247-amino-acid polypeptide reads, in one-letter code: Segregation and condensation protein A (247 aa).

This sequence belongs to the ScpA family. Component of a cohesin-like complex composed of ScpA, ScpB and the Smc homodimer, in which ScpA and ScpB bind to the head domain of Smc. The presence of the three proteins is required for the association of the complex with DNA.

The protein localises to the cytoplasm. In terms of biological role, participates in chromosomal partition during cell division. May act via the formation of a condensin-like complex containing Smc and ScpB that pull DNA away from mid-cell into both cell halves. This is Segregation and condensation protein A from Bacillus anthracis (strain A0248).